The chain runs to 310 residues: HPr kinase/phosphorylase (310 aa).

Residues histidine 138 and lysine 159 contribute to the active site. 153 to 160 (GGSGVGKS) lines the ATP pocket. Mg(2+) is bound at residue serine 160. The active-site Proton acceptor; for phosphorylation activity. Proton donor; for dephosphorylation activity is the aspartate 177. The important for the catalytic mechanism of both phosphorylation and dephosphorylation stretch occupies residues 201 to 210 (LEIRGLGIIN). Glutamate 202 provides a ligand contact to Mg(2+). Arginine 243 is an active-site residue. The tract at residues 264 to 269 (PVRPGR) is important for the catalytic mechanism of dephosphorylation.

This sequence belongs to the HPrK/P family. As to quaternary structure, homohexamer. Mg(2+) is required as a cofactor.

The enzyme catalyses [HPr protein]-L-serine + ATP = [HPr protein]-O-phospho-L-serine + ADP + H(+). It catalyses the reaction [HPr protein]-O-phospho-L-serine + phosphate + H(+) = [HPr protein]-L-serine + diphosphate. Functionally, catalyzes the ATP- as well as the pyrophosphate-dependent phosphorylation of a specific serine residue in HPr, a phosphocarrier protein of the phosphoenolpyruvate-dependent sugar phosphotransferase system (PTS). HprK/P also catalyzes the pyrophosphate-producing, inorganic phosphate-dependent dephosphorylation (phosphorolysis) of seryl-phosphorylated HPr (P-Ser-HPr). The two antagonistic activities of HprK/P are regulated by several intracellular metabolites, which change their concentration in response to the absence or presence of rapidly metabolisable carbon sources (glucose, fructose, etc.) in the growth medium. Also phosphorylates/dephosphorylates the HPr-like catabolite repression protein crh on a specific serine residue. Therefore, by controlling the phosphorylation state of HPr and crh, HPrK/P is a sensor enzyme that plays a major role in the regulation of carbon metabolism and sugar transport: it mediates carbon catabolite repression (CCR), and regulates PTS-catalyzed carbohydrate uptake and inducer exclusion. In Shouchella clausii (strain KSM-K16) (Alkalihalobacillus clausii), this protein is HPr kinase/phosphorylase.